A 105-amino-acid chain; its full sequence is UPF0145 protein Sala_0338 (105 aa).

It belongs to the UPF0145 family.

This is UPF0145 protein Sala_0338 from Sphingopyxis alaskensis (strain DSM 13593 / LMG 18877 / RB2256) (Sphingomonas alaskensis).